Reading from the N-terminus, the 590-residue chain is Aspartate--tRNA(Asp/Asn) ligase (590 aa).

Glu-175 serves as a coordination point for L-aspartate. The interval 199–202 (QQYK) is aspartate. Arg-221 and His-450 together coordinate L-aspartate. Residue 221–223 (RDE) coordinates ATP. Glu-484 contacts ATP. Arg-491 lines the L-aspartate pocket. Residue 536–539 (GVDR) participates in ATP binding.

The protein belongs to the class-II aminoacyl-tRNA synthetase family. Type 1 subfamily. In terms of assembly, homodimer.

It localises to the cytoplasm. It carries out the reaction tRNA(Asx) + L-aspartate + ATP = L-aspartyl-tRNA(Asx) + AMP + diphosphate. Aspartyl-tRNA synthetase with relaxed tRNA specificity since it is able to aspartylate not only its cognate tRNA(Asp) but also tRNA(Asn). Reaction proceeds in two steps: L-aspartate is first activated by ATP to form Asp-AMP and then transferred to the acceptor end of tRNA(Asp/Asn). The chain is Aspartate--tRNA(Asp/Asn) ligase from Rhodopseudomonas palustris (strain BisB18).